Reading from the N-terminus, the 673-residue chain is DNA ligase (673 aa).

NAD(+) is bound by residues 33 to 37 (DYEYD), 82 to 83 (SL), and E113. K115 acts as the N6-AMP-lysine intermediate in catalysis. Residues R136, E170, K285, and K309 each contribute to the NAD(+) site. Zn(2+) contacts are provided by C403, C406, C421, and C426. Residues 583–672 (AKSDILKGYT…SHEEVEKILM (90 aa)) enclose the BRCT domain.

It belongs to the NAD-dependent DNA ligase family. LigA subfamily. It depends on Mg(2+) as a cofactor. Mn(2+) serves as cofactor.

It catalyses the reaction NAD(+) + (deoxyribonucleotide)n-3'-hydroxyl + 5'-phospho-(deoxyribonucleotide)m = (deoxyribonucleotide)n+m + AMP + beta-nicotinamide D-nucleotide.. DNA ligase that catalyzes the formation of phosphodiester linkages between 5'-phosphoryl and 3'-hydroxyl groups in double-stranded DNA using NAD as a coenzyme and as the energy source for the reaction. It is essential for DNA replication and repair of damaged DNA. The polypeptide is DNA ligase (Caldicellulosiruptor saccharolyticus (strain ATCC 43494 / DSM 8903 / Tp8T 6331)).